A 551-amino-acid chain; its full sequence is Eukaryotic translation initiation factor 3 subunit D-2 (551 aa).

Residues 108-152 (RTRGRTGRGTPNIASLGGSTAGGATASSTKYGKGRHTRNTQNVGR) form a disordered region. Residues 115–136 (RGTPNIASLGGSTAGGATASST) show a composition bias toward low complexity. Residues 290–304 (QFDLLTVNETSVEPP) are RNA gate. Positions 527–551 (PENAFDSDRDEEEESSEPLSNSNDN) are disordered.

This sequence belongs to the eIF-3 subunit D family. Component of the eukaryotic translation initiation factor 3 (eIF-3) complex. The eIF-3 complex interacts with pix.

It is found in the cytoplasm. In terms of biological role, mRNA cap-binding component of the eukaryotic translation initiation factor 3 (eIF-3) complex, which is involved in protein synthesis of a specialized repertoire of mRNAs and, together with other initiation factors, stimulates binding of mRNA and methionyl-tRNAi to the 40S ribosome. The eIF-3 complex specifically targets and initiates translation of a subset of mRNAs involved in cell proliferation. In the eIF-3 complex, eif3d specifically recognizes and binds the 7-methylguanosine cap of a subset of mRNAs. The protein is Eukaryotic translation initiation factor 3 subunit D-2 of Drosophila simulans (Fruit fly).